The following is a 347-amino-acid chain: uncharacterized protein (347 aa).

Residues 1-26 (MQGRVAGSCAPLGLLLVCLHLPGLFA) form the signal peptide. Polar residues predominate over residues 41 to 60 (GTNLPQLGQPSSTGPSNSEH). 2 disordered regions span residues 41 to 110 (GTNL…MDSW) and 148 to 189 (SGPL…AGGK). Residues 148 to 157 (SGPLPGESSP) show a composition bias toward low complexity.

In terms of assembly, binds to numerous extracellular matrix proteins.

Its subcellular location is the secreted. It localises to the extracellular space. The protein resides in the extracellular matrix. This is an uncharacterized protein from Pan troglodytes (Chimpanzee).